Reading from the N-terminus, the 786-residue chain is Endonuclease MutS2 (786 aa).

333 to 340 provides a ligand contact to ATP; that stretch reads GPNTGGKT. The interval 682-709 is disordered; the sequence is EKIKPSKQSAAQRPVVKVSGGGMSGPST. One can recognise a Smr domain in the interval 711–786; that stretch reads LDLRGERYDQ…GSGATIVNFK (76 aa).

This sequence belongs to the DNA mismatch repair MutS family. MutS2 subfamily. In terms of assembly, homodimer. Binds to stalled ribosomes, contacting rRNA.

In terms of biological role, endonuclease that is involved in the suppression of homologous recombination and thus may have a key role in the control of bacterial genetic diversity. Its function is as follows. Acts as a ribosome collision sensor, splitting the ribosome into its 2 subunits. Detects stalled/collided 70S ribosomes which it binds and splits by an ATP-hydrolysis driven conformational change. Acts upstream of the ribosome quality control system (RQC), a ribosome-associated complex that mediates the extraction of incompletely synthesized nascent chains from stalled ribosomes and their subsequent degradation. Probably generates substrates for RQC. In Lacticaseibacillus casei (strain BL23) (Lactobacillus casei), this protein is Endonuclease MutS2.